Consider the following 393-residue polypeptide: Phospholipase A1-II 1 (393 aa).

A coiled-coil region spans residues 200-220 (QVLNEIKRLQDMYEHEETSIT). Ser-225 acts as the Acyl-ester intermediate in catalysis. Active-site charge relay system residues include Ser-225, Asp-284, and His-321.

It belongs to the AB hydrolase superfamily. Lipase family.

It localises to the cytoplasm. Functionally, acylhydrolase that catalyzes the hydrolysis of phospholipids at the sn-1 position. The sequence is that of Phospholipase A1-II 1 from Oryza sativa subsp. indica (Rice).